Reading from the N-terminus, the 1008-residue chain is Envelopment polyprotein (1008 aa).

The first 17 residues, 1–17 (MVRTYLLLLLLCGPATP), serve as a signal peptide directing secretion. The Lumenal segment spans residues 18-394 (FFNHLMDVTR…NWANIHCFSK (377 aa)). N-linked (GlcNAc...) asparagine; by host glycosylation is found at Asn34, Asn70, and Asn108. 8 disulfides stabilise this stretch: Cys138–Cys269, Cys156–Cys166, Cys206–Cys247, Cys216–Cys226, Cys233–Cys238, Cys292–Cys295, Cys299–Cys368, and Cys319–Cys324. Asn208 carries N-linked (GlcNAc...) asparagine; by host glycosylation. A helical membrane pass occupies residues 395 to 415 (EQVLILVAVSSLCILLLASVL). Topologically, residues 416-496 (RALKVIATFT…VRQKMFNLTR (81 aa)) are cytoplasmic. The tract at residues 419–465 (KVIATFTWKIIKPFWWILSLLCRTCSKRLNKRAERLKESIHSLEEGL) is golgi retention signal. The segment at 461–465 (LEEGL) is important for correct targeting of the glycoproteins to the Golgi complex but not for heterodimerization. Positions 497–513 (LSPVVVGMLCLACPVES) are internal signal sequence for glycoprotein C. 12 cysteine pairs are disulfide-bonded: Cys514-Cys555, Cys527-Cys537, Cys580-Cys677, Cys595-Cys789, Cys601-Cys650, Cys607-Cys657, Cys612-Cys639, Cys643-Cys648, Cys728-Cys742, Cys758-Cys771, Cys851-Cys924, and Cys861-Cys864. Residues 514-977 (CSDSISVTAS…GWFKASWLRA (464 aa)) are Lumenal-facing. The segment at 601 to 607 (CHLMGAC) is fusion loop. Positions 644–655 (GGALCQCFNMRP) are fusion loop. N-linked (GlcNAc...) asparagine; by host glycans are attached at residues Asn691 and Asn696. Residues Asn912 and Asn949 are each glycosylated (N-linked (GlcNAc...) asparagine; by host). Residues 978–998 (IWAILGGTVSLIIGVVIIYMV) traverse the membrane as a helical segment. The Cytoplasmic portion of the chain corresponds to 999–1008 (FTLCLKVKKS).

Belongs to the phlebovirus envelope glycoprotein family. In terms of assembly, homodimer. Heterodimer with glycoprotein C. Homotrimer (postfusion). As to quaternary structure, heterodimer with glycoprotein N. Homotrimer (postfusion). In terms of processing, specific enzymatic cleavages in vivo yield mature proteins including glycoprotein C and glycoprotein N. Post-translationally, the cytoplasmic tail is Palmitoylated. Glycosylated. Contains principally poly-N-acetyllactosamine glycans. In terms of processing, glycosylated. Contains principally oligomannose-type glycans that can attach to host CD209/DC-SIGN. Post-translationally, palmitoylated.

It localises to the virion membrane. The protein localises to the host Golgi apparatus membrane. Its subcellular location is the host endoplasmic reticulum membrane. Its function is as follows. Structural component of the virion that interacts with glycoprotein C. It shields the hydrophobic fusion loops of the glycoprotein C, preventing premature fusion. The glycoprotein protrusions are arranged on an icosahedral lattice, with T=12 triangulation. They are able to attach the virion to the host cell receptor CD209/DC-SIGN and to promote fusion of membranes with the late endosome after endocytosis of the virion. Plays a role in the packaging of ribonucleoproteins during virus assembly. Structural component of the virion that interacts with glycoprotein N. Acts as a class II fusion protein that is activated upon acidification and subsequent repositioning of the glycoprotein N. The glycoprotein protrusions are arranged on an icosahedral lattice, with T=12 triangulation. They are able to attach the virion to the host cell receptor CD209/DC-SIGN and to promote fusion of membranes with the late endosome after endocytosis of the virion. This chain is Envelopment polyprotein (GP), found in Homo sapiens (Human).